The chain runs to 118 residues: MQWALAVLLAFLSPASQKSSNLEGRTKSVIRQTGSSAEITCDLAEGSNGYIHWYLHQEGKAPQRLQYYDSYNSKVVLESGVSPGKYYTYASTRNNLRLILRNLIENDFGVYYCATWDG.

The signal sequence occupies residues 1 to 17 (MQWALAVLLAFLSPASQ). Positions 18-118 (KSSNLEGRTK…GVYYCATWDG (101 aa)) constitute an Ig-like domain. Cysteines 41 and 113 form a disulfide.

As to quaternary structure, gamma-delta TR is a heterodimer composed of a gamma and delta chain; disulfide-linked. The gamma-delta TR is associated with the transmembrane signaling CD3 coreceptor proteins following the stoichiometry: a single gamma-delta TR heterodimer associates with one CD3D-CD3E heterodimer, one CD3G-CD3E heterodimer and one CD247 homodimer forming a stable octameric structure. Upon activation, gamma-delta TR complex associates with FCER1G to initiate intracellular signaling.

The protein resides in the cell membrane. In terms of biological role, v region of the variable domain of T cell receptor (TR) gamma chain that participates in the antigen recognition. Gamma-delta TRs recognize a variety of self and foreign non-peptide antigens frequently expressed at the epithelial boundaries between the host and external environment, including endogenous lipids presented by MH-like protein CD1D and phosphoantigens presented by butyrophilin-like molecule BTN3A1. Upon antigen recognition induces rapid, innate-like immune responses involved in pathogen clearance and tissue repair. Binding of gamma-delta TR complex to antigen triggers phosphorylation of immunoreceptor tyrosine-based activation motifs (ITAMs) in the CD3 chains by the LCK and FYN kinases, allowing the recruitment, phosphorylation, and activation of ZAP70 that facilitates phosphorylation of the scaffolding proteins LCP2 and LAT. This lead to the formation of a supramolecular signalosome that recruits the phospholipase PLCG1, resulting in calcium mobilization and ERK activation, ultimately leading to T cell expansion and differentiation into effector cells. Gamma-delta TRs are produced through somatic rearrangement of a limited repertoire of variable (V), diversity (D), and joining (J) genes. The potential diversity of gamma-delta TRs is conferred by the unique ability to rearrange (D) genes in tandem and to utilize all three reading frames. The combinatorial diversity is considerably increased by the sequence exonuclease trimming and random nucleotide (N) region additions which occur during the V-(D)-J rearrangements. The polypeptide is T cell receptor gamma variable 2 (Homo sapiens (Human)).